Reading from the N-terminus, the 447-residue chain is Glutamate--tRNA ligase 2 (447 aa).

The 'HIGH' region motif lies at 9 to 19; that stretch reads PSPTGYLHIGN. Positions 240–244 match the 'KMSKS' region motif; the sequence is GLSKR. Lysine 243 lines the ATP pocket.

Belongs to the class-I aminoacyl-tRNA synthetase family. Glutamate--tRNA ligase type 1 subfamily. As to quaternary structure, monomer.

The protein resides in the cytoplasm. The catalysed reaction is tRNA(Glu) + L-glutamate + ATP = L-glutamyl-tRNA(Glu) + AMP + diphosphate. Its function is as follows. Catalyzes the attachment of glutamate to tRNA(Glu) in a two-step reaction: glutamate is first activated by ATP to form Glu-AMP and then transferred to the acceptor end of tRNA(Glu). The chain is Glutamate--tRNA ligase 2 from Methylobacterium sp. (strain 4-46).